A 319-amino-acid polypeptide reads, in one-letter code: tRNA uridine(34) hydroxylase (319 aa).

The region spanning 123 to 221 (GDPDVVVIDT…YLETIPPEQS (99 aa)) is the Rhodanese domain. The Cysteine persulfide intermediate role is filled by Cys-181. Positions 298–319 (ARQQVHIGASPEPKAMPATAGR) are disordered.

The protein belongs to the TrhO family.

It carries out the reaction uridine(34) in tRNA + AH2 + O2 = 5-hydroxyuridine(34) in tRNA + A + H2O. Its function is as follows. Catalyzes oxygen-dependent 5-hydroxyuridine (ho5U) modification at position 34 in tRNAs. This Albidiferax ferrireducens (strain ATCC BAA-621 / DSM 15236 / T118) (Rhodoferax ferrireducens) protein is tRNA uridine(34) hydroxylase.